The sequence spans 1199 residues: Nucleolar protein 6 (1199 aa).

Residues 1–10 (MLRNKRKAGK) show a composition bias toward basic residues. Disordered stretches follow at residues 1–51 (MLRN…EPKP) and 1146–1199 (KREQ…KALK). 2 stretches are compositionally biased toward basic and acidic residues: residues 28-37 (HAEDHSDLEH) and 1146-1169 (KREQ…EKST).

Belongs to the NRAP family. In terms of assembly, part of the small subunit (SSU) processome, composed of more than 70 proteins and the RNA chaperone small nucleolar RNA (snoRNA) U3.

The protein localises to the nucleus. It localises to the nucleolus. The protein resides in the chromosome. Functionally, part of the small subunit (SSU) processome, first precursor of the small eukaryotic ribosomal subunit. During the assembly of the SSU processome in the nucleolus, many ribosome biogenesis factors, an RNA chaperone and ribosomal proteins associate with the nascent pre-rRNA and work in concert to generate RNA folding, modifications, rearrangements and cleavage as well as targeted degradation of pre-ribosomal RNA by the RNA exosome. The polypeptide is Nucleolar protein 6 (Drosophila yakuba (Fruit fly)).